The primary structure comprises 89 residues: Small ribosomal subunit protein uS15 (89 aa).

This sequence belongs to the universal ribosomal protein uS15 family. Part of the 30S ribosomal subunit. Forms a bridge to the 50S subunit in the 70S ribosome, contacting the 23S rRNA.

Functionally, one of the primary rRNA binding proteins, it binds directly to 16S rRNA where it helps nucleate assembly of the platform of the 30S subunit by binding and bridging several RNA helices of the 16S rRNA. Forms an intersubunit bridge (bridge B4) with the 23S rRNA of the 50S subunit in the ribosome. This is Small ribosomal subunit protein uS15 from Chlorobium phaeovibrioides (strain DSM 265 / 1930) (Prosthecochloris vibrioformis (strain DSM 265)).